A 286-amino-acid chain; its full sequence is D-tagatose-1,6-bisphosphate aldolase subunit KbaY (286 aa).

The active-site Proton donor is the aspartate 82. Zn(2+)-binding residues include histidine 83 and histidine 180. Glycine 181 serves as a coordination point for dihydroxyacetone phosphate. A Zn(2+)-binding site is contributed by histidine 208. Dihydroxyacetone phosphate contacts are provided by residues glycine 209–serine 211 and asparagine 230–threonine 233.

Belongs to the class II fructose-bisphosphate aldolase family. TagBP aldolase KbaY subfamily. In terms of assembly, homotetramer. Forms a complex with KbaZ. It depends on Zn(2+) as a cofactor.

It catalyses the reaction D-tagatofuranose 1,6-bisphosphate = D-glyceraldehyde 3-phosphate + dihydroxyacetone phosphate. Its pathway is carbohydrate metabolism; D-tagatose 6-phosphate degradation; D-glyceraldehyde 3-phosphate and glycerone phosphate from D-tagatose 6-phosphate: step 2/2. Catalytic subunit of the tagatose-1,6-bisphosphate aldolase KbaYZ, which catalyzes the reversible aldol condensation of dihydroxyacetone phosphate (DHAP or glycerone-phosphate) with glyceraldehyde 3-phosphate (G3P) to produce tagatose 1,6-bisphosphate (TBP). Requires KbaZ subunit for full activity and stability. The chain is D-tagatose-1,6-bisphosphate aldolase subunit KbaY from Escherichia coli O45:K1 (strain S88 / ExPEC).